The following is a 550-amino-acid chain: Hydroxylamine reductase (550 aa).

Positions 4, 7, 19, and 26 each coordinate [2Fe-2S] cluster. Positions 249, 273, 317, 405, 433, 458, 492, and 494 each coordinate hybrid [4Fe-2O-2S] cluster. Cys-405 is subject to Cysteine persulfide.

The protein belongs to the HCP family. The cofactor is [2Fe-2S] cluster. It depends on hybrid [4Fe-2O-2S] cluster as a cofactor.

It localises to the cytoplasm. The enzyme catalyses A + NH4(+) + H2O = hydroxylamine + AH2 + H(+). Its function is as follows. Catalyzes the reduction of hydroxylamine to form NH(3) and H(2)O. The protein is Hydroxylamine reductase of Aeromonas salmonicida (strain A449).